A 275-amino-acid chain; its full sequence is Tryptophan synthase alpha chain (275 aa).

Active-site proton acceptor residues include Glu58 and Asp69.

It belongs to the TrpA family. In terms of assembly, tetramer of two alpha and two beta chains. Ubiquitously expressed at low levels in seedlings, roots, hypocotyls, cotyledons, stems, leaves, inflorescences, flowers, siliques and seeds.

The protein localises to the cytoplasm. The enzyme catalyses (1S,2R)-1-C-(indol-3-yl)glycerol 3-phosphate + L-serine = D-glyceraldehyde 3-phosphate + L-tryptophan + H2O. The catalysed reaction is (1S,2R)-1-C-(indol-3-yl)glycerol 3-phosphate = indole + D-glyceraldehyde 3-phosphate. The protein operates within amino-acid biosynthesis; L-tryptophan biosynthesis; L-tryptophan from chorismate: step 5/5. The alpha subunit is responsible for the aldol cleavage of indoleglycerol phosphate to indole and glyceraldehyde 3-phosphate. Contributes to the tryptophan-independent indole biosynthesis, and possibly to auxin production. The sequence is that of Tryptophan synthase alpha chain (TRPA1) from Arabidopsis thaliana (Mouse-ear cress).